The sequence spans 359 residues: Nicotinate-nucleotide--dimethylbenzimidazole phosphoribosyltransferase (359 aa).

Glu-318 (proton acceptor) is an active-site residue.

Belongs to the CobT family. As to quaternary structure, homodimer.

The enzyme catalyses 5,6-dimethylbenzimidazole + nicotinate beta-D-ribonucleotide = alpha-ribazole 5'-phosphate + nicotinate + H(+). The protein operates within nucleoside biosynthesis; alpha-ribazole biosynthesis; alpha-ribazole from 5,6-dimethylbenzimidazole: step 1/2. Its function is as follows. Catalyzes the synthesis of alpha-ribazole-5'-phosphate from nicotinate mononucleotide (NAMN) and 5,6-dimethylbenzimidazole (DMB). This Escherichia coli (strain UTI89 / UPEC) protein is Nicotinate-nucleotide--dimethylbenzimidazole phosphoribosyltransferase.